Consider the following 130-residue polypeptide: Protein ApaG (130 aa).

The ApaG domain maps to 3–127 (KAETRGITVT…FSLDSPHLRR (125 aa)).

The chain is Protein ApaG from Methylorubrum populi (strain ATCC BAA-705 / NCIMB 13946 / BJ001) (Methylobacterium populi).